Reading from the N-terminus, the 203-residue chain is CASP-like protein 2U6 (203 aa).

The Cytoplasmic segment spans residues 1–31 (MSEHRIPVAADKKISPPISAGEQKGCKGLKR). A helical transmembrane segment spans residues 32–52 (TDLMLRFAAFVCCTVTMVVLI). Over 53–84 (TDKQTSAIQVPGFNNLTITKTVSFDLAKAFVY) the chain is Extracellular. Residue asparagine 67 is glycosylated (N-linked (GlcNAc...) asparagine). The helical transmembrane segment at 85 to 105 (LVSAAGIGAGYTLLVLVLSII) threads the bilayer. The Cytoplasmic segment spans residues 106 to 111 (SAERSK). A helical transmembrane segment spans residues 112 to 132 (AIAWFIFVFDQLITYVLLAAA). Residues 133-164 (AASTEVAYMGAHAPPEASWLKVCSLFGRFCHQ) lie on the Extracellular side of the membrane. A helical membrane pass occupies residues 165-185 (LGASLVTSLISTVLFAFSAAI). Over 186-203 (SAYYLFSNTNVRPAYSKG) the chain is Cytoplasmic.

The protein belongs to the Casparian strip membrane proteins (CASP) family. As to quaternary structure, homodimer and heterodimers.

Its subcellular location is the cell membrane. In Selaginella moellendorffii (Spikemoss), this protein is CASP-like protein 2U6.